We begin with the raw amino-acid sequence, 96 residues long: Co-chaperonin GroES (96 aa).

The protein belongs to the GroES chaperonin family. Heptamer of 7 subunits arranged in a ring. Interacts with the chaperonin GroEL.

The protein resides in the cytoplasm. Together with the chaperonin GroEL, plays an essential role in assisting protein folding. The GroEL-GroES system forms a nano-cage that allows encapsulation of the non-native substrate proteins and provides a physical environment optimized to promote and accelerate protein folding. GroES binds to the apical surface of the GroEL ring, thereby capping the opening of the GroEL channel. In Wolbachia sp. subsp. Brugia malayi (strain TRS), this protein is Co-chaperonin GroES.